Consider the following 876-residue polypeptide: Alanine--tRNA ligase (876 aa).

Zn(2+)-binding residues include H568, H572, C670, and H674.

It belongs to the class-II aminoacyl-tRNA synthetase family. Requires Zn(2+) as cofactor.

Its subcellular location is the cytoplasm. It catalyses the reaction tRNA(Ala) + L-alanine + ATP = L-alanyl-tRNA(Ala) + AMP + diphosphate. Catalyzes the attachment of alanine to tRNA(Ala) in a two-step reaction: alanine is first activated by ATP to form Ala-AMP and then transferred to the acceptor end of tRNA(Ala). Also edits incorrectly charged Ser-tRNA(Ala) and Gly-tRNA(Ala) via its editing domain. The sequence is that of Alanine--tRNA ligase from Anaplasma phagocytophilum (strain HZ).